Reading from the N-terminus, the 162-residue chain is 2-C-methyl-D-erythritol 2,4-cyclodiphosphate synthase (162 aa).

Positions 9 and 11 each coordinate a divalent metal cation. 4-CDP-2-C-methyl-D-erythritol 2-phosphate-binding positions include 9–11 (DVH) and 35–36 (HS). Histidine 43 is an a divalent metal cation binding site. Residues 57-59 (DIG), 62-66 (FPDTD), 133-136 (TTTE), phenylalanine 140, and arginine 143 contribute to the 4-CDP-2-C-methyl-D-erythritol 2-phosphate site.

This sequence belongs to the IspF family. As to quaternary structure, homotrimer. The cofactor is a divalent metal cation.

It catalyses the reaction 4-CDP-2-C-methyl-D-erythritol 2-phosphate = 2-C-methyl-D-erythritol 2,4-cyclic diphosphate + CMP. It participates in isoprenoid biosynthesis; isopentenyl diphosphate biosynthesis via DXP pathway; isopentenyl diphosphate from 1-deoxy-D-xylulose 5-phosphate: step 4/6. In terms of biological role, involved in the biosynthesis of isopentenyl diphosphate (IPP) and dimethylallyl diphosphate (DMAPP), two major building blocks of isoprenoid compounds. Catalyzes the conversion of 4-diphosphocytidyl-2-C-methyl-D-erythritol 2-phosphate (CDP-ME2P) to 2-C-methyl-D-erythritol 2,4-cyclodiphosphate (ME-CPP) with a corresponding release of cytidine 5-monophosphate (CMP). In Histophilus somni (strain 129Pt) (Haemophilus somnus), this protein is 2-C-methyl-D-erythritol 2,4-cyclodiphosphate synthase.